The primary structure comprises 87 residues: Small ribosomal subunit protein bS20 (87 aa).

Residues 1 to 21 (MANHKSAEKRARQTIKKTERN) are disordered.

This sequence belongs to the bacterial ribosomal protein bS20 family.

Its function is as follows. Binds directly to 16S ribosomal RNA. The chain is Small ribosomal subunit protein bS20 from Campylobacter jejuni subsp. jejuni serotype O:23/36 (strain 81-176).